We begin with the raw amino-acid sequence, 116 residues long: Regulator of ribonuclease activity B (116 aa).

Belongs to the RraB family. As to quaternary structure, interacts with the C-terminal region of Rne.

Its subcellular location is the cytoplasm. Functionally, globally modulates RNA abundance by binding to RNase E (Rne) and regulating its endonucleolytic activity. Can modulate Rne action in a substrate-dependent manner by altering the composition of the degradosome. The polypeptide is Regulator of ribonuclease activity B (Colwellia psychrerythraea (strain 34H / ATCC BAA-681) (Vibrio psychroerythus)).